Consider the following 219-residue polypeptide: Cytidylate kinase (219 aa).

Position 15–23 (15–23 (GPAASGKGT)) interacts with ATP.

This sequence belongs to the cytidylate kinase family. Type 1 subfamily.

The protein localises to the cytoplasm. The enzyme catalyses CMP + ATP = CDP + ADP. It catalyses the reaction dCMP + ATP = dCDP + ADP. The sequence is that of Cytidylate kinase from Brucella melitensis biotype 1 (strain ATCC 23456 / CCUG 17765 / NCTC 10094 / 16M).